The following is a 347-amino-acid chain: N-acetyl-gamma-glutamyl-phosphate reductase (347 aa).

Residue cysteine 152 is part of the active site.

This sequence belongs to the NAGSA dehydrogenase family. Type 1 subfamily.

The protein resides in the cytoplasm. The catalysed reaction is N-acetyl-L-glutamate 5-semialdehyde + phosphate + NADP(+) = N-acetyl-L-glutamyl 5-phosphate + NADPH + H(+). It functions in the pathway amino-acid biosynthesis; L-arginine biosynthesis; N(2)-acetyl-L-ornithine from L-glutamate: step 3/4. Catalyzes the NADPH-dependent reduction of N-acetyl-5-glutamyl phosphate to yield N-acetyl-L-glutamate 5-semialdehyde. The protein is N-acetyl-gamma-glutamyl-phosphate reductase of Neisseria meningitidis serogroup C (strain 053442).